A 375-amino-acid polypeptide reads, in one-letter code: Chaperone protein DnaJ (375 aa).

Residues 5-70 (DYYELLGISR…EKRAAYDQYG (66 aa)) form the J domain. Residues 132–210 (GTTKDIKIHT…CHGDGRVNKA (79 aa)) form a CR-type zinc finger. Zn(2+)-binding residues include Cys145, Cys148, Cys162, Cys165, Cys184, Cys187, Cys198, and Cys201. CXXCXGXG motif repeat units follow at residues 145-152 (CDTCHGTG), 162-169 (CPHCHGAG), 184-191 (CHFCHGTG), and 198-205 (CKTCHGDG).

It belongs to the DnaJ family. As to quaternary structure, homodimer. It depends on Zn(2+) as a cofactor.

It localises to the cytoplasm. Functionally, participates actively in the response to hyperosmotic and heat shock by preventing the aggregation of stress-denatured proteins and by disaggregating proteins, also in an autonomous, DnaK-independent fashion. Unfolded proteins bind initially to DnaJ; upon interaction with the DnaJ-bound protein, DnaK hydrolyzes its bound ATP, resulting in the formation of a stable complex. GrpE releases ADP from DnaK; ATP binding to DnaK triggers the release of the substrate protein, thus completing the reaction cycle. Several rounds of ATP-dependent interactions between DnaJ, DnaK and GrpE are required for fully efficient folding. Also involved, together with DnaK and GrpE, in the DNA replication of plasmids through activation of initiation proteins. The chain is Chaperone protein DnaJ from Aggregatibacter actinomycetemcomitans (Actinobacillus actinomycetemcomitans).